The chain runs to 778 residues: MNKKILETLEFDKVKALFEPHLLTEQGLEQLRQLAPTAKADKIKQAFAEMKEMQALFVEQPHFTILSTKEIAGVCKRLEMGADLNIEEFLLLKRVLLASRELQSFYANLENVSLEELAFWFEKLHDFPQLQGNLQAFNDAGFIENFASEELARIRRKIHDSESQVRDVLQDLLKQKAQMLTEGIVASRNGRQVLPVKNTYRNKIAGVVHDISASGNTVYIEPREVVKLSEEIASLRADERYEMLRILQEISERVRPHAAEIANDAWIIGHLDLIRAKVRFIQERQAVVPQLSENQEIQLLHVCHPLVKNAVANDVYFGQDLTAIVITGPNTGGKTIMLKTLGLTQVMAQSGLPILADKGSRVGIFEEIFADIGDEQSIEQSLSTFSSHMTNIVDILGKVNQHSLLLLDELGAGTDPQEGAALAMAILEDLRLRQIKTMATTHYPELKAYGIETAFVQNASMEFDTATLRPTYRFMQGVPGRSNAFEIAKRLGLSEVIVGDASQQIDQDNDVNRIIEQLEEQTLESRKRLDNIREVEQENLKMNRALKKLYNELNREKETELNKAREQAAEIVDMALSESDQILKNLHSKSQLKPHEIIEAKAKLKKLAPEKVDLSKNKVLQKAKKKRAPKVGDDIVVLSYGQRGTLTSQLKDGRWEAQVGLIKMTLEEKEFDLVQAQQEKAVKKKQVNVVKRTSGRGPQARLDLRGKRYEEAMNELDTFIDQALLNNMAQVDIIHGIGTGVIREGVTKYLQRNKHVKSFGYAPQNAGGSGATIVTFKG.

328–335 (GPNTGGKT) contacts ATP. A Smr domain is found at 702–777 (LDLRGKRYEE…GSGATIVTFK (76 aa)).

Belongs to the DNA mismatch repair MutS family. MutS2 subfamily. As to quaternary structure, homodimer. Binds to stalled ribosomes, contacting rRNA.

Functionally, endonuclease that is involved in the suppression of homologous recombination and thus may have a key role in the control of bacterial genetic diversity. Its function is as follows. Acts as a ribosome collision sensor, splitting the ribosome into its 2 subunits. Detects stalled/collided 70S ribosomes which it binds and splits by an ATP-hydrolysis driven conformational change. Acts upstream of the ribosome quality control system (RQC), a ribosome-associated complex that mediates the extraction of incompletely synthesized nascent chains from stalled ribosomes and their subsequent degradation. Probably generates substrates for RQC. This is Endonuclease MutS2 from Streptococcus pneumoniae serotype 2 (strain D39 / NCTC 7466).